A 179-amino-acid polypeptide reads, in one-letter code: Adenine phosphoribosyltransferase (179 aa).

This sequence belongs to the purine/pyrimidine phosphoribosyltransferase family. Homodimer.

The protein localises to the cytoplasm. It catalyses the reaction AMP + diphosphate = 5-phospho-alpha-D-ribose 1-diphosphate + adenine. The protein operates within purine metabolism; AMP biosynthesis via salvage pathway; AMP from adenine: step 1/1. In terms of biological role, catalyzes a salvage reaction resulting in the formation of AMP, that is energically less costly than de novo synthesis. This Azorhizobium caulinodans (strain ATCC 43989 / DSM 5975 / JCM 20966 / LMG 6465 / NBRC 14845 / NCIMB 13405 / ORS 571) protein is Adenine phosphoribosyltransferase.